Here is a 271-residue protein sequence, read N- to C-terminus: Tryptophan synthase alpha chain (271 aa).

Residues glutamate 49 and aspartate 60 each act as proton acceptor in the active site.

This sequence belongs to the TrpA family. As to quaternary structure, tetramer of two alpha and two beta chains.

It carries out the reaction (1S,2R)-1-C-(indol-3-yl)glycerol 3-phosphate + L-serine = D-glyceraldehyde 3-phosphate + L-tryptophan + H2O. The protein operates within amino-acid biosynthesis; L-tryptophan biosynthesis; L-tryptophan from chorismate: step 5/5. The alpha subunit is responsible for the aldol cleavage of indoleglycerol phosphate to indole and glyceraldehyde 3-phosphate. The protein is Tryptophan synthase alpha chain of Burkholderia mallei (strain NCTC 10247).